The following is a 41-amino-acid chain: Large ribosomal subunit protein bL36 (41 aa).

It belongs to the bacterial ribosomal protein bL36 family.

The sequence is that of Large ribosomal subunit protein bL36 from Xylella fastidiosa (strain M23).